Here is a 1052-residue protein sequence, read N- to C-terminus: Focal adhesion kinase 1 (1052 aa).

The segment at Met1–Glu27 is disordered. Ala2 bears the N-acetylalanine mark. Tyr5 is modified (phosphotyrosine). A compositionally biased stretch (polar residues) spans Leu10–His21. A Phosphothreonine modification is found at Thr13. A phosphoserine mark is found at Ser29 and Ser54. Residues Arg35–Ser355 form the FERM domain. Lys152 is covalently cross-linked (Glycyl lysine isopeptide (Lys-Gly) (interchain with G-Cter in SUMO)). Phosphotyrosine; by autocatalysis is present on Tyr397. Tyr407 carries the phosphotyrosine modification. Residues Ile422–Leu680 form the Protein kinase domain. ATP contacts are provided by residues Ile428–Gly434, Lys454, and Glu500–Cys502. Asp546 acts as the Proton acceptor in catalysis. Tyr570 is subject to Phosphotyrosine. Phosphotyrosine; by RET and SRC is present on residues Tyr576 and Tyr577. Ser580 carries the phosphoserine modification. Basic and acidic residues predominate over residues Lys684–Arg697. 2 disordered regions span residues Lys684 to Gln734 and Leu839 to Asp922. The tract at residues Gly707 to His1052 is interaction with TGFB1I1. At Ser722 the chain carries Phosphoserine. A Phosphoserine; by CDK5 modification is found at Ser732. Residues Leu839 to Gly849 show a composition bias toward basic and acidic residues. Residue Ser843 is modified to Phosphoserine. The residue at position 861 (Tyr861) is a Phosphotyrosine. Pro residues predominate over residues Pro869–Gly880. Ser887 and Ser910 each carry phosphoserine. Positions Pro912 to His1052 are interaction with ARHGEF28. Thr914 is subject to Phosphothreonine. Tyr925 is subject to Phosphotyrosine.

It belongs to the protein kinase superfamily. Tyr protein kinase family. FAK subfamily. As to quaternary structure, interacts (via first Pro-rich region) with CAS family members (via SH3 domain), including BCAR1, BCAR3, and CASS4. Interacts with NEDD9 (via SH3 domain). Interacts with GIT1. Interacts with SORBS1. Interacts with ARHGEF28. Interacts with SHB. Part of a complex composed of THSD1, PTK2/FAK1, TLN1 and VCL. Interacts with PXN and TLN1. Interacts with STAT1. Interacts with DCC. Interacts with WASL. Interacts with ARHGEF7. Interacts with GRB2 and GRB7. Component of a complex that contains at least FER, CTTN and PTK2/FAK1. Interacts with BMX. Interacts with TGFB1I1. Interacts with STEAP4. Interacts with ZFYVE21. Interacts with ESR1. Interacts with PIK3R1 or PIK3R2. Interacts with SRC, FGR, FLT4 and RET. Interacts with EPHA2 in resting cells; activation of EPHA2 recruits PTPN11, leading to dephosphorylation of PTK2/FAK1 and dissociation of the complex. Interacts with EPHA1 (kinase activity-dependent). Interacts with CD4; this interaction requires the presence of HIV-1 gp120. Interacts with PIAS1. Interacts with ARHGAP26 and SHC1. Interacts with RB1CC1; this inhibits PTK2/FAK1 activity and activation of downstream signaling pathways. Interacts with P53/TP53 and MDM2. Interacts with LPXN (via LD motif 3). Interacts with MISP. Interacts with CIB1 isoform 2. Interacts with CD36. Interacts with EMP2; regulates PTK2 activation and localization. Interacts with DSCAM. Interacts with AMBRA1. Interacts (when tyrosine-phosphorylated) with tensin TNS1; the interaction is increased by phosphorylation of TNS1. In terms of processing, phosphorylated on tyrosine residues upon activation, e.g. upon integrin signaling. Tyr-397 is the major autophosphorylation site, but other kinases can also phosphorylate this residue. Phosphorylation at Tyr-397 promotes interaction with SRC and SRC family members, leading to phosphorylation at Tyr-576, Tyr-577 and at additional tyrosine residues. FGR promotes phosphorylation at Tyr-397 and Tyr-576. FER promotes phosphorylation at Tyr-577, Tyr-861 and Tyr-925, even when cells are not adherent. Tyr-397, Tyr-576 and Ser-722 are phosphorylated only when cells are adherent. Phosphorylation at Tyr-397 is important for interaction with BMX, PIK3R1 and SHC1. Phosphorylation at Tyr-925 is important for interaction with GRB2. Dephosphorylated by PTPN11; PTPN11 is recruited to PTK2 via EPHA2 (tyrosine phosphorylated). Microtubule-induced dephosphorylation at Tyr-397 is crucial for the induction of focal adhesion disassembly; this dephosphorylation could be catalyzed by PTPN11 and regulated by ZFYVE21. Phosphorylation on tyrosine residues is enhanced by NTN1. Sumoylated; this enhances autophosphorylation. Detected in B and T-lymphocytes. Isoform 1 and isoform 6 are detected in lung fibroblasts (at protein level). Ubiquitous. Expressed in epithelial cells (at protein level).

The protein localises to the cell junction. It is found in the focal adhesion. Its subcellular location is the cell membrane. It localises to the cytoplasm. The protein resides in the perinuclear region. The protein localises to the cell cortex. It is found in the cytoskeleton. Its subcellular location is the microtubule organizing center. It localises to the centrosome. The protein resides in the nucleus. The protein localises to the cilium basal body. It catalyses the reaction L-tyrosyl-[protein] + ATP = O-phospho-L-tyrosyl-[protein] + ADP + H(+). Its activity is regulated as follows. Subject to autoinhibition, mediated by interactions between the FERM domain and the kinase domain. Activated by autophosphorylation at Tyr-397. This promotes interaction with SRC and phosphorylation at Tyr-576 and Tyr-577 in the kinase activation loop. Phosphorylation at Tyr-576 and Tyr-577 is required for maximal kinase activity. Inhibited by TAC544, TAE226, PF-573,228 and PF-562,271. In terms of biological role, non-receptor protein-tyrosine kinase that plays an essential role in regulating cell migration, adhesion, spreading, reorganization of the actin cytoskeleton, formation and disassembly of focal adhesions and cell protrusions, cell cycle progression, cell proliferation and apoptosis. Required for early embryonic development and placenta development. Required for embryonic angiogenesis, normal cardiomyocyte migration and proliferation, and normal heart development. Regulates axon growth and neuronal cell migration, axon branching and synapse formation; required for normal development of the nervous system. Plays a role in osteogenesis and differentiation of osteoblasts. Functions in integrin signal transduction, but also in signaling downstream of numerous growth factor receptors, G-protein coupled receptors (GPCR), EPHA2, netrin receptors and LDL receptors. Forms multisubunit signaling complexes with SRC and SRC family members upon activation; this leads to the phosphorylation of additional tyrosine residues, creating binding sites for scaffold proteins, effectors and substrates. Regulates numerous signaling pathways. Promotes activation of phosphatidylinositol 3-kinase and the AKT1 signaling cascade. Promotes activation of MAPK1/ERK2, MAPK3/ERK1 and the MAP kinase signaling cascade. Promotes localized and transient activation of guanine nucleotide exchange factors (GEFs) and GTPase-activating proteins (GAPs), and thereby modulates the activity of Rho family GTPases. Signaling via CAS family members mediates activation of RAC1. Phosphorylates NEDD9 following integrin stimulation. Recruits the ubiquitin ligase MDM2 to P53/TP53 in the nucleus, and thereby regulates P53/TP53 activity, P53/TP53 ubiquitination and proteasomal degradation. Phosphorylates SRC; this increases SRC kinase activity. Phosphorylates ACTN1, ARHGEF7, GRB7, RET and WASL. Promotes phosphorylation of PXN and STAT1; most likely PXN and STAT1 are phosphorylated by a SRC family kinase that is recruited to autophosphorylated PTK2/FAK1, rather than by PTK2/FAK1 itself. Promotes phosphorylation of BCAR1; GIT2 and SHC1; this requires both SRC and PTK2/FAK1. Promotes phosphorylation of BMX and PIK3R1. Isoform 6 (FRNK) does not contain a kinase domain and inhibits PTK2/FAK1 phosphorylation and signaling. Its enhanced expression can attenuate the nuclear accumulation of LPXN and limit its ability to enhance serum response factor (SRF)-dependent gene transcription. Functionally, isoform 6 (FRNK) does not contain a kinase domain and inhibits PTK2/FAK1 phosphorylation and signaling. Its enhanced expression can attenuate the nuclear accumulation of LPXN and limit its ability to enhance serum response factor (SRF)-dependent gene transcription. The polypeptide is Focal adhesion kinase 1 (Homo sapiens (Human)).